The primary structure comprises 283 residues: ATP phosphoribosyltransferase (283 aa).

The protein belongs to the ATP phosphoribosyltransferase family. Long subfamily. The cofactor is Mg(2+).

The protein localises to the cytoplasm. It carries out the reaction 1-(5-phospho-beta-D-ribosyl)-ATP + diphosphate = 5-phospho-alpha-D-ribose 1-diphosphate + ATP. It participates in amino-acid biosynthesis; L-histidine biosynthesis; L-histidine from 5-phospho-alpha-D-ribose 1-diphosphate: step 1/9. Feedback inhibited by histidine. In terms of biological role, catalyzes the condensation of ATP and 5-phosphoribose 1-diphosphate to form N'-(5'-phosphoribosyl)-ATP (PR-ATP). Has a crucial role in the pathway because the rate of histidine biosynthesis seems to be controlled primarily by regulation of HisG enzymatic activity. The chain is ATP phosphoribosyltransferase from Phocaeicola vulgatus (strain ATCC 8482 / DSM 1447 / JCM 5826 / CCUG 4940 / NBRC 14291 / NCTC 11154) (Bacteroides vulgatus).